Reading from the N-terminus, the 89-residue chain is Small ribosomal subunit protein uS17 (89 aa).

This sequence belongs to the universal ribosomal protein uS17 family. As to quaternary structure, part of the 30S ribosomal subunit.

Functionally, one of the primary rRNA binding proteins, it binds specifically to the 5'-end of 16S ribosomal RNA. This chain is Small ribosomal subunit protein uS17, found in Xanthomonas campestris pv. campestris (strain 8004).